We begin with the raw amino-acid sequence, 608 residues long: Elongation factor 4 (608 aa).

The tr-type G domain occupies 11 to 193; it reads SHIRNFSIVA…AIVHKLPAPK (183 aa). GTP is bound by residues 23-28 and 140-143; these read DHGKST and NKID.

This sequence belongs to the TRAFAC class translation factor GTPase superfamily. Classic translation factor GTPase family. LepA subfamily.

The protein localises to the cell inner membrane. The enzyme catalyses GTP + H2O = GDP + phosphate + H(+). Its function is as follows. Required for accurate and efficient protein synthesis under certain stress conditions. May act as a fidelity factor of the translation reaction, by catalyzing a one-codon backward translocation of tRNAs on improperly translocated ribosomes. Back-translocation proceeds from a post-translocation (POST) complex to a pre-translocation (PRE) complex, thus giving elongation factor G a second chance to translocate the tRNAs correctly. Binds to ribosomes in a GTP-dependent manner. The polypeptide is Elongation factor 4 (Rhizobium meliloti (strain 1021) (Ensifer meliloti)).